We begin with the raw amino-acid sequence, 572 residues long: MRTSQYLLSTLKETPADAEVISHQLMLRAGMIRKLASGLYTWLPTGVRVLKKVENIVREEMNNAGAIEVSMPVVQPADLWQESGRWEQYGPELLRFVDRGERPFVLGPTHEEVITDLIRNELSSYKQLPLNFYQIQTKFRDEVRPRFGVMRSREFLMKDAYSFHTSQESLQETYDAMYAAYSKIFSRMGLDFRAVQADTGSIGGSASHEFQVLAQSGEDDVVFSDTSDYAANIELAEAIAPKEPRAAATQEMTLVDTPNAKTIAELVEQFNLPIKKTVKTLLVKAVEGSSFPLVALLVRGDHELNEVKAEKLPQVASPLTFATEEEIRAVVKAGPGSLGPVNMPIPVVIDRTVAAMSDFTAGANIDGKHYFGINWDRDVATPEVADIRNVVAGDPSPDGQGTLLIKRGIEVGHIFQLGTKYSEALKASVQGEDGRNQILTMGCYGIGVTRVVAAAIEQNYDERGIVWPDAIAPFQVAILPMNMHKSFRVQELAEKLYSELRAQGIEVLLDDRKERPGVMFADMELIGIPHTIVLGDRNLDNDDIEYKYRRNGEKQLIKTGDIVEYLVKQIKG.

This sequence belongs to the class-II aminoacyl-tRNA synthetase family. ProS type 1 subfamily. As to quaternary structure, homodimer.

The protein localises to the cytoplasm. The enzyme catalyses tRNA(Pro) + L-proline + ATP = L-prolyl-tRNA(Pro) + AMP + diphosphate. Functionally, catalyzes the attachment of proline to tRNA(Pro) in a two-step reaction: proline is first activated by ATP to form Pro-AMP and then transferred to the acceptor end of tRNA(Pro). As ProRS can inadvertently accommodate and process non-cognate amino acids such as alanine and cysteine, to avoid such errors it has two additional distinct editing activities against alanine. One activity is designated as 'pretransfer' editing and involves the tRNA(Pro)-independent hydrolysis of activated Ala-AMP. The other activity is designated 'posttransfer' editing and involves deacylation of mischarged Ala-tRNA(Pro). The misacylated Cys-tRNA(Pro) is not edited by ProRS. This chain is Proline--tRNA ligase, found in Escherichia coli O157:H7.